The sequence spans 357 residues: Serine/threonine-protein kinase nekl-2 (357 aa).

The region spanning 4 to 267 (YEKVRVVGRG…VSQLLSDPLV (264 aa)) is the Protein kinase domain. Residues 10–18 (VGRGAFGVC) and K35 each bind ATP. D137 acts as the Proton acceptor in catalysis. Positions 281–290 (IEPPPTDKRK) are enriched in basic and acidic residues. The segment at 281-357 (IEPPPTDKRK…QSRSQVHSKY (77 aa)) is disordered. Polar residues-rich tracts occupy residues 293–327 (ASLS…QLTP) and 336–357 (FFSS…HSKY).

It belongs to the protein kinase superfamily. NEK Ser/Thr protein kinase family. NIMA subfamily. It depends on Mg(2+) as a cofactor. As to expression, expressed in hypodermal cells including in hyp7 syncytium but not in seam cells.

The protein localises to the cytoplasm. The enzyme catalyses L-seryl-[protein] + ATP = O-phospho-L-seryl-[protein] + ADP + H(+). It carries out the reaction L-threonyl-[protein] + ATP = O-phospho-L-threonyl-[protein] + ADP + H(+). Probable serine/threonine-protein kinase required for the completion of molting. May play a role in endocytosis in the hypodermis syncytium. The polypeptide is Serine/threonine-protein kinase nekl-2 (Caenorhabditis elegans).